A 503-amino-acid polypeptide reads, in one-letter code: Drimenol monooxygenase (503 aa).

Residues 7–23 form a helical membrane-spanning segment; the sequence is MICIVVSGLLLYSSRTS. Ser-471 lines the heme pocket.

The protein belongs to the cytochrome P450 family. It depends on heme as a cofactor.

It localises to the membrane. It carries out the reaction (5S,9S,10S)-drim-7-en-11-ol + reduced [NADPH--hemoprotein reductase] + O2 = (5S,10S)-(9R)-7-drimene-11,12-diol + oxidized [NADPH--hemoprotein reductase] + H2O + H(+). Functionally, catalyzes the conversion of drimenol to drimendiol, a precursor of the sesquiterpenoid polygodial. Polygodial has been shown to be an antifeedant for a number of herbivorous insects. The polypeptide is Drimenol monooxygenase (Persicaria hydropiper (Marshpepper knotweed)).